The primary structure comprises 583 residues: Complement factor I (583 aa).

Residues 1–18 (MKLLHVFLLFLCFHLRFC) form the signal peptide. Disulfide bonds link Cys33–Cys255, Cys43–Cys54, Cys48–Cys59, Cys61–Cys93, Cys67–Cys86, Cys75–Cys106, Cys141–Cys181, Cys154–Cys214, Cys186–Cys196, Cys229–Cys247, Cys241–Cys256, Cys259–Cys271, Cys266–Cys284, Cys278–Cys293, Cys327–Cys453, Cys365–Cys381, and Cys373–Cys444. A Kazal-like domain is found at 55-108 (IEGTCVCKLPYQCPKNGTAVCATNRRSFPTYCQQKSLECLHPGTKFLNNGTCTA). Asn70 carries an N-linked (GlcNAc...) asparagine glycan. Asn103 carries N-linked (GlcNAc...) (complex) asparagine glycosylation. The SRCR domain occupies 114-212 (VSLKHGNTDS…TMGYQDFADV (99 aa)). Residue Asn177 is glycosylated (N-linked (GlcNAc...) asparagine). 2 consecutive LDL-receptor class A domains span residues 213-257 (VCYT…LCCK) and 258-294 (ACQGKGFHCKSGVCIPSQYQCNGEVDCITGEDEVGCA). Residues Lys239, Asp242, Ile244, Asp246, Asp252, and Glu253 each contribute to the Ca(2+) site. Residues Tyr276, Asn279, Glu281, Asp283, Asp289, and Glu290 each coordinate Ca(2+). A Peptidase S1 domain is found at 340-574 (IVGGKRAQLG…YFDWISYHVG (235 aa)). Residues His380 and Asp429 each act as charge relay system in the active site. Asn464 and Asn494 each carry an N-linked (GlcNAc...) asparagine glycan. 3 cysteine pairs are disulfide-bonded: Cys467–Cys531, Cys495–Cys510, and Cys521–Cys550. Ser525 functions as the Charge relay system in the catalytic mechanism. Asn536 carries an N-linked (GlcNAc...) asparagine glycan.

Belongs to the peptidase S1 family. As to quaternary structure, heterodimer of a light and heavy chains; disulfide-linked. The fully processed and mature protein circulates as a zymogen, and is allosterically activated by substrate-induced remodeling of the active site. Interacts with C3b. Interacts with complement factor H. (Microbial infection) Interacts with Staphylococcus aureus clumping factor A/ClfA; this interaction enhances cleavage of C3b into iC3b by CFI. Expressed in the liver by hepatocytes. Also present in other cells such as monocytes, fibroblasts or keratinocytes.

Its subcellular location is the secreted. The protein localises to the extracellular space. The catalysed reaction is Inactivates complement subcomponents C3b, iC3b and C4b by proteolytic cleavage.. In terms of biological role, trypsin-like serine protease that plays an essential role in regulating the immune response by controlling all complement pathways. Inhibits these pathways by cleaving three peptide bonds in the alpha-chain of C3b and two bonds in the alpha-chain of C4b thereby inactivating these proteins. Essential cofactors for these reactions include factor H and C4BP in the fluid phase and membrane cofactor protein/CD46 and CR1 on cell surfaces. The presence of these cofactors on healthy cells allows degradation of deposited C3b by CFI in order to prevent undesired complement activation, while in apoptotic cells or microbes, the absence of such cofactors leads to C3b-mediated complement activation and subsequent opsonization. The polypeptide is Complement factor I (CFI) (Homo sapiens (Human)).